The sequence spans 346 residues: NADH-ubiquinone oxidoreductase chain 2 (346 aa).

The next 11 helical transmembrane spans lie at 1–21 (MNPH…TITI), 25–45 (HWVL…PLIS), 60–80 (FLTQ…NAWA), 95–115 (CLLL…HFWF), 124–144 (LMTA…LLLM), 149–169 (LNPA…GWMG), 178–195 (ILAF…IILV), 200–219 (LALL…FMAL), 242–262 (ATLM…GFMP), 274–294 (EMTP…FFYL), and 326–346 (AILA…HAIV).

The protein belongs to the complex I subunit 2 family.

It is found in the mitochondrion inner membrane. It catalyses the reaction a ubiquinone + NADH + 5 H(+)(in) = a ubiquinol + NAD(+) + 4 H(+)(out). Core subunit of the mitochondrial membrane respiratory chain NADH dehydrogenase (Complex I) that is believed to belong to the minimal assembly required for catalysis. Complex I functions in the transfer of electrons from NADH to the respiratory chain. The immediate electron acceptor for the enzyme is believed to be ubiquinone. The chain is NADH-ubiquinone oxidoreductase chain 2 (MT-ND2) from Mareca falcata (Falcated duck).